A 210-amino-acid chain; its full sequence is Redox-sensing transcriptional repressor Rex (210 aa).

Residues 17–56 (KYYRYLAELMDNDVDRISSKELSEKIGFTASQIRQDLNNF) constitute a DNA-binding region (H-T-H motif). An NAD(+)-binding site is contributed by 91 to 96 (GAGNIG).

This sequence belongs to the transcriptional regulatory Rex family. As to quaternary structure, homodimer.

It is found in the cytoplasm. Functionally, modulates transcription in response to changes in cellular NADH/NAD(+) redox state. This chain is Redox-sensing transcriptional repressor Rex, found in Clostridium novyi (strain NT).